Consider the following 357-residue polypeptide: Uroporphyrinogen decarboxylase (357 aa).

Residues 34–38 (RQAGR), D83, Y158, S213, and H336 each bind substrate.

This sequence belongs to the uroporphyrinogen decarboxylase family. Homodimer.

It is found in the cytoplasm. It carries out the reaction uroporphyrinogen III + 4 H(+) = coproporphyrinogen III + 4 CO2. It participates in porphyrin-containing compound metabolism; protoporphyrin-IX biosynthesis; coproporphyrinogen-III from 5-aminolevulinate: step 4/4. Its function is as follows. Catalyzes the decarboxylation of four acetate groups of uroporphyrinogen-III to yield coproporphyrinogen-III. This is Uroporphyrinogen decarboxylase from Mycolicibacterium paratuberculosis (strain ATCC BAA-968 / K-10) (Mycobacterium paratuberculosis).